Here is an 891-residue protein sequence, read N- to C-terminus: Inter-alpha-trypsin inhibitor heavy chain H3 (891 aa).

An N-terminal signal peptide occupies residues 1–20; the sequence is MALAQWPYLILALLSGLAVS. Residues 21-34 constitute a propeptide that is removed on maturation; that stretch reads GFPRNPSLLLGKRS. Residues 29 to 158 enclose the VIT domain; sequence LLGKRSLPGR…KVTFELTYEE (130 aa). Asn91 is a glycosylation site (N-linked (GlcNAc...) asparagine). The VWFA domain occupies 284–467; that stretch reads SVVFVIDVSG…LQLQGFYEEV (184 aa). Asp651 carries the aspartate 1-(chondroitin 4-sulfate)-ester modification. Residues 652–891 constitute a propeptide that is removed on maturation; sequence PHFIIQIPEK…HRDYIVPNLF (240 aa).

Belongs to the ITIH family. In terms of assembly, I-alpha-I plasma protease inhibitors are assembled from one or two heavy chains (H1, H2 or H3) and one light chain, bikunin. Inter-alpha-inhibitor (I-alpha-I) is composed of H1, H2 and bikunin, inter-alpha-like inhibitor (I-alpha-LI) of H2 and bikunin, and pre-alpha-inhibitor (P-alpha-I) of H3 and bikunin.

It localises to the secreted. May act as a carrier of hyaluronan in serum or as a binding protein between hyaluronan and other matrix protein, including those on cell surfaces in tissues to regulate the localization, synthesis and degradation of hyaluronan which are essential to cells undergoing biological processes. This Bos taurus (Bovine) protein is Inter-alpha-trypsin inhibitor heavy chain H3 (ITIH3).